A 458-amino-acid chain; its full sequence is ATP synthase subunit beta (458 aa).

148-155 (GGAGVGKT) is an ATP binding site.

The protein belongs to the ATPase alpha/beta chains family. As to quaternary structure, F-type ATPases have 2 components, CF(1) - the catalytic core - and CF(0) - the membrane proton channel. CF(1) has five subunits: alpha(3), beta(3), gamma(1), delta(1), epsilon(1). CF(0) has three main subunits: a(1), b(2) and c(9-12). The alpha and beta chains form an alternating ring which encloses part of the gamma chain. CF(1) is attached to CF(0) by a central stalk formed by the gamma and epsilon chains, while a peripheral stalk is formed by the delta and b chains.

The protein localises to the cell inner membrane. It carries out the reaction ATP + H2O + 4 H(+)(in) = ADP + phosphate + 5 H(+)(out). Functionally, produces ATP from ADP in the presence of a proton gradient across the membrane. The catalytic sites are hosted primarily by the beta subunits. This Legionella pneumophila (strain Paris) protein is ATP synthase subunit beta.